Here is a 168-residue protein sequence, read N- to C-terminus: Ribosome maturation factor RimM (168 aa).

The PRC barrel domain occupies 97–168 (PNEYYYYELL…RLVVKVPEWI (72 aa)).

This sequence belongs to the RimM family. As to quaternary structure, binds ribosomal protein uS19.

Its subcellular location is the cytoplasm. Its function is as follows. An accessory protein needed during the final step in the assembly of 30S ribosomal subunit, possibly for assembly of the head region. Essential for efficient processing of 16S rRNA. May be needed both before and after RbfA during the maturation of 16S rRNA. It has affinity for free ribosomal 30S subunits but not for 70S ribosomes. In Pseudothermotoga lettingae (strain ATCC BAA-301 / DSM 14385 / NBRC 107922 / TMO) (Thermotoga lettingae), this protein is Ribosome maturation factor RimM.